The sequence spans 810 residues: Zinc finger transcription factor YRR1 (810 aa).

The tract at residues 1 to 47 is disordered; that stretch reads MKRRSDALLGSFQATNVTPPSDNSNSTAGGANGSNSGTPTSTSGKKR. Over residues 12–22 the composition is skewed to polar residues; the sequence is FQATNVTPPSD. Over residues 23–43 the composition is skewed to low complexity; it reads NSNSTAGGANGSNSGTPTSTS. Positions 54 to 82 form a DNA-binding region, zn(2)-C6 fungal-type; sequence CGFCRRRKLRCDQQKPMCSTCISRNLTTC. The disordered stretch occupies residues 722–742; sequence ELDPQSDNPSSEAKIVSDRQR.

It is found in the cytoplasm. Its subcellular location is the nucleus. Functionally, transcription factor involved in the regulation of multidrug resistance genes. Acts in concert with YRR1. The sequence is that of Zinc finger transcription factor YRR1 (YRR1) from Saccharomyces cerevisiae (strain ATCC 204508 / S288c) (Baker's yeast).